A 280-amino-acid chain; its full sequence is Small ribosomal subunit protein uS15m (280 aa).

Belongs to the universal ribosomal protein uS15 family. Component of the mitochondrial ribosome small subunit (28S) which comprises a 12S rRNA and about 30 distinct proteins. In terms of tissue distribution, expressed in anterior and posterior midgut primordia in stage 11 embryos. In stage 13 embryos, expression is high in the developing midgut and hindgut. In stage 16 embryos, expression is elevated in the midgut, hindgut, and in a small region that will give rise to pharyngeal muscles and to the stomatogastric nervous system. In larvae, expression is predominant in the gut, and head, presumably in pharyngeal muscles.

It localises to the mitochondrion. In terms of biological role, essential for gut mitochondrial activity. Might be involved in tissue specific growth factor production. The chain is Small ribosomal subunit protein uS15m (bonsai) from Drosophila melanogaster (Fruit fly).